The chain runs to 175 residues: Probable RNA-binding protein EIF1AD (175 aa).

In terms of domain architecture, S1-like spans 5–89 (TKKRYITNKV…VKGEIEYILD (85 aa)). Positions 116-128 (EAKRGQTSDKMID) are enriched in basic and acidic residues. Residues 116 to 175 (EAKRGQTSDKMIDDDMLPPSESEEEDESEGEETYDEDDVDDEEEEEFDTYNPNRMQAPSK) are disordered. Acidic residues predominate over residues 129 to 163 (DDMLPPSESEEEDESEGEETYDEDDVDDEEEEEFD). Residues 165 to 175 (YNPNRMQAPSK) are compositionally biased toward polar residues.

The protein belongs to the EIF1AD family.

The protein is Probable RNA-binding protein EIF1AD of Caenorhabditis elegans.